The chain runs to 329 residues: Phosphatidylcholine:ceramide cholinephosphotransferase 3 (329 aa).

Topologically, residues 1–26 (MAVPPVEMYSGSFWNRMRKPLPLRTQ) are cytoplasmic. Residues 27 to 47 (VIRFTVVFVIVSFILAVALQI) traverse the membrane as a helical segment. Residues 48 to 74 (THERMPDPKVTKPLPDLGFELLTKVPG) are Extracellular-facing. The helical transmembrane segment at 75–95 (MYVLADCCIGFLNILSVFTAF) threads the bilayer. Residues 96-147 (KLYLLHRHCVGSGEPELPCNIPGVSRFFLSVWLCKENCRIELRNIHTIAWIR) lie on the Cytoplasmic side of the membrane. A helical membrane pass occupies residues 148 to 168 (FITSYALLLLFRSAVIVMTSL). Residues 169 to 211 (PAPDDLCQNPPKIENPVKNVILTVLTAGAGSIHCGDLMYSGHT) lie on the Extracellular side of the membrane. Residues 212 to 232 (VILTLHLMFHWIYGAMVHWSF) form a helical membrane-spanning segment. Position 233 (Arg-233) is a topological domain, cytoplasmic. A helical membrane pass occupies residues 234–254 (PVVTVVAIFGYYCIVASRFHY). The Extracellular segment spans residues 255–257 (TDD). Residues 258-278 (VLVAIYLTIATFIAVGHNADG) traverse the membrane as a helical segment. Residues 279-329 (APWQLQLFIRWWPCCGANSREVTEDSQPVMVAFKSEAAGQSSRKVVDERNH) lie on the Cytoplasmic side of the membrane.

Belongs to the sphingomyelin synthase family.

The protein localises to the membrane. It catalyses the reaction an N-acylsphing-4-enine + a 1,2-diacyl-sn-glycero-3-phosphocholine = a sphingomyelin + a 1,2-diacyl-sn-glycerol. It carries out the reaction an N-acylsphinganine + a 1,2-diacyl-sn-glycero-3-phosphocholine = an N-acylsphinganine-1-phosphocholine + a 1,2-diacyl-sn-glycerol. The enzyme catalyses an N-acylsphing-4-enine + a 1,2-diacyl-sn-glycero-3-phosphoethanolamine = an N-acylsphing-4-enine 1-phosphoethanolamine + a 1,2-diacyl-sn-glycerol. The catalysed reaction is an N-acylsphinganine + a 1,2-diacyl-sn-glycero-3-phosphoethanolamine = an N-acylsphinganine-1-phosphoethanolamine + a 1,2-diacyl-sn-glycerol. Functionally, bifunctional sphingomyelin (SM)/ethanolamine phosphorylceramide (EPC) synthase with minimal inositol phosphorylceramide (IPC) synthase activity. Specificity is likely to be defined by residues in the lumenal catalytic domain that interact with the polar head groups of the phospholipid donors. SM is synthesized by both stages of the parasite life cycle, bloodstream forms (BSF) and procyclic forms (PCF), by transferring the phosphocholine from a 1,2-diacyl-sn-glycero-3-phosphocholine to an N-acylsphing-4-enine (ceramide) or an N-acylsphinganine (dihydroceramide). Similarly, EPC is synthesized by transferring phosphoethanolamine from a 1,2-diacyl-sn-glycero-3-phosphoethanolamine to ceramide or dihydroceramide by BSF and PCF, while IPC is confined to PCF. The ceramide/dihydroceramide ratios are skewed towards dihydroceramide in PCF parasites and ceramide in BSF parasites, this is likely due to differential expression and/or regulation of dihydroceramide desaturase, the enzyme responsible for converting dihydroceramide to ceramide. The polypeptide is Phosphatidylcholine:ceramide cholinephosphotransferase 3 (Trypanosoma brucei brucei).